A 373-amino-acid chain; its full sequence is Probable protein phosphatase 2C 73 (373 aa).

Residues 61–354 enclose the PPM-type phosphatase domain; sequence LASLFSKRGE…DDMSVVCLFL (294 aa). Mn(2+)-binding residues include Asp97, Gly98, Asp299, and Asp345.

It belongs to the PP2C family. Requires Mg(2+) as cofactor. The cofactor is Mn(2+).

It carries out the reaction O-phospho-L-seryl-[protein] + H2O = L-seryl-[protein] + phosphate. It catalyses the reaction O-phospho-L-threonyl-[protein] + H2O = L-threonyl-[protein] + phosphate. The sequence is that of Probable protein phosphatase 2C 73 (PPC6-7) from Arabidopsis thaliana (Mouse-ear cress).